A 129-amino-acid polypeptide reads, in one-letter code: D-ribose pyranase (129 aa).

Catalysis depends on His-20, which acts as the Proton donor. Substrate is bound by residues Asp-28, His-96, and 118–120 (YAN).

Belongs to the RbsD / FucU family. RbsD subfamily. As to quaternary structure, homodecamer.

It is found in the cytoplasm. It catalyses the reaction beta-D-ribopyranose = beta-D-ribofuranose. Its pathway is carbohydrate metabolism; D-ribose degradation; D-ribose 5-phosphate from beta-D-ribopyranose: step 1/2. Catalyzes the interconversion of beta-pyran and beta-furan forms of D-ribose. The chain is D-ribose pyranase from Shouchella clausii (strain KSM-K16) (Alkalihalobacillus clausii).